The chain runs to 285 residues: 2-dehydro-3-deoxyphosphooctonate aldolase (285 aa).

This sequence belongs to the KdsA family.

It localises to the cytoplasm. It catalyses the reaction D-arabinose 5-phosphate + phosphoenolpyruvate + H2O = 3-deoxy-alpha-D-manno-2-octulosonate-8-phosphate + phosphate. It participates in carbohydrate biosynthesis; 3-deoxy-D-manno-octulosonate biosynthesis; 3-deoxy-D-manno-octulosonate from D-ribulose 5-phosphate: step 2/3. It functions in the pathway bacterial outer membrane biogenesis; lipopolysaccharide biosynthesis. The polypeptide is 2-dehydro-3-deoxyphosphooctonate aldolase (Methylibium petroleiphilum (strain ATCC BAA-1232 / LMG 22953 / PM1)).